The sequence spans 677 residues: Fermitin family homolog 1 (677 aa).

Positions 96 to 653 (MLRLRLPNAK…HEYIGGYIFL (558 aa)) constitute an FERM domain. The disordered stretch occupies residues 157-181 (KEPVIEDILNLESSSTSSGSPVSPG). Low complexity predominate over residues 169–181 (SSSTSSGSPVSPG). Phosphoserine is present on residues Ser170 and Ser179. The PH domain maps to 377–473 (KLFRPKKLML…WMAACILASK (97 aa)).

The protein belongs to the kindlin family. Interacts with the cytoplasmic domain of integrins ITGB1 and ITGB3.

Its subcellular location is the cytoplasm. The protein localises to the cytoskeleton. It localises to the cell junction. It is found in the focal adhesion. The protein resides in the cell projection. Its subcellular location is the ruffle membrane. Its function is as follows. Involved in cell adhesion. Contributes to integrin activation. When coexpressed with talin, potentiates activation of ITGA2B. Required for normal keratinocyte proliferation. Required for normal polarization of basal keratinocytes in skin, and for normal cell shape. Required for normal adhesion of keratinocytes to fibronectin and laminin, and for normal keratinocyte migration to wound sites. The sequence is that of Fermitin family homolog 1 (Fermt1) from Mus musculus (Mouse).